The primary structure comprises 327 residues: Deoxyribonuclease (327 aa).

The or 35 signal peptide spans 1–24 (MSKKLRNFLVRIIVAAFASFAVMA). Residues 299-327 (DSTTDEIENSVDDSEEIVYNDTTTEEEEN) are disordered.

The enzyme catalyses Endonucleolytic cleavage to 5'-phosphodinucleotide and 5'-phosphooligonucleotide end-products.. In terms of biological role, may have a role in S.equisimilis virulence. The chain is Deoxyribonuclease (sdc) from Streptococcus dysgalactiae subsp. equisimilis (Streptococcus equisimilis).